A 132-amino-acid polypeptide reads, in one-letter code: Small ribosomal subunit protein uS8 (132 aa).

This sequence belongs to the universal ribosomal protein uS8 family. As to quaternary structure, part of the 30S ribosomal subunit. Contacts proteins S5 and S12.

Functionally, one of the primary rRNA binding proteins, it binds directly to 16S rRNA central domain where it helps coordinate assembly of the platform of the 30S subunit. The polypeptide is Small ribosomal subunit protein uS8 (Geobacillus sp. (strain WCH70)).